Here is a 336-residue protein sequence, read N- to C-terminus: Probable ADP-ribosylation factor GTPase-activating protein AGD13 (336 aa).

Residues 15-137 form the Arf-GAP domain; sequence KRRIRDLLNQ…EFLKPSLRIT (123 aa). The C4-type zinc finger occupies 30–53; that stretch reads CADCGASDPKWASANIGVFICLKC. The C2 domain occupies 162 to 280; the sequence is RTNSSSQTMF…AMAFGDPEMF (119 aa). Ca(2+) is bound by residues Asp249, Ser252, and Asp255.

It depends on Ca(2+) as a cofactor.

In terms of biological role, GTPase-activating protein (GAP) for ADP ribosylation factor (ARF). This chain is Probable ADP-ribosylation factor GTPase-activating protein AGD13 (AGD13), found in Arabidopsis thaliana (Mouse-ear cress).